Consider the following 330-residue polypeptide: GTPase Obg (330 aa).

The region spanning methionine 1–leucine 159 is the Obg domain. The OBG-type G domain occupies serine 160–lysine 327. GTP contacts are provided by residues glycine 166–serine 173, phenylalanine 191–valine 195, aspartate 212–glycine 215, asparagine 279–aspartate 282, and serine 308–tyrosine 310. Residues serine 173 and threonine 193 each coordinate Mg(2+).

This sequence belongs to the TRAFAC class OBG-HflX-like GTPase superfamily. OBG GTPase family. As to quaternary structure, monomer. The cofactor is Mg(2+).

The protein localises to the cytoplasm. An essential GTPase which binds GTP, GDP and possibly (p)ppGpp with moderate affinity, with high nucleotide exchange rates and a fairly low GTP hydrolysis rate. Plays a role in control of the cell cycle, stress response, ribosome biogenesis and in those bacteria that undergo differentiation, in morphogenesis control. The sequence is that of GTPase Obg from Rickettsia typhi (strain ATCC VR-144 / Wilmington).